A 207-amino-acid polypeptide reads, in one-letter code: Uridine kinase (207 aa).

Position 11–18 (11–18 (GGSGSGKT)) interacts with ATP.

This sequence belongs to the uridine kinase family.

The protein resides in the cytoplasm. It carries out the reaction uridine + ATP = UMP + ADP + H(+). The enzyme catalyses cytidine + ATP = CMP + ADP + H(+). It participates in pyrimidine metabolism; CTP biosynthesis via salvage pathway; CTP from cytidine: step 1/3. Its pathway is pyrimidine metabolism; UMP biosynthesis via salvage pathway; UMP from uridine: step 1/1. In Staphylococcus haemolyticus (strain JCSC1435), this protein is Uridine kinase.